Here is a 132-residue protein sequence, read N- to C-terminus: Glycine cleavage system H protein (132 aa).

The Lipoyl-binding domain maps to 24 to 106; sequence LVRIGISAFA…HGEGWLLVVR (83 aa). N6-lipoyllysine is present on Lys-65.

Belongs to the GcvH family. In terms of assembly, the glycine cleavage system is composed of four proteins: P, T, L and H. (R)-lipoate is required as a cofactor.

Functionally, the glycine cleavage system catalyzes the degradation of glycine. The H protein shuttles the methylamine group of glycine from the P protein to the T protein. The protein is Glycine cleavage system H protein of Prochlorococcus marinus (strain MIT 9313).